A 215-amino-acid polypeptide reads, in one-letter code: Nucleoside triphosphate pyrophosphatase (215 aa).

The protein belongs to the Maf family. It depends on a divalent metal cation as a cofactor.

The protein localises to the cytoplasm. It carries out the reaction a ribonucleoside 5'-triphosphate + H2O = a ribonucleoside 5'-phosphate + diphosphate + H(+). It catalyses the reaction a 2'-deoxyribonucleoside 5'-triphosphate + H2O = a 2'-deoxyribonucleoside 5'-phosphate + diphosphate + H(+). In terms of biological role, nucleoside triphosphate pyrophosphatase. May have a dual role in cell division arrest and in preventing the incorporation of modified nucleotides into cellular nucleic acids. The protein is Nucleoside triphosphate pyrophosphatase of Rickettsia conorii (strain ATCC VR-613 / Malish 7).